We begin with the raw amino-acid sequence, 274 residues long: Diaminopimelate epimerase (274 aa).

The substrate site is built by asparagine 11, glutamine 44, and asparagine 64. Cysteine 73 (proton donor) is an active-site residue. Substrate-binding positions include 74 to 75 (GN), asparagine 157, asparagine 190, and 208 to 209 (ER). Cysteine 217 serves as the catalytic Proton acceptor. 218-219 (GS) is a binding site for substrate.

The protein belongs to the diaminopimelate epimerase family. Homodimer.

Its subcellular location is the cytoplasm. It carries out the reaction (2S,6S)-2,6-diaminopimelate = meso-2,6-diaminopimelate. It functions in the pathway amino-acid biosynthesis; L-lysine biosynthesis via DAP pathway; DL-2,6-diaminopimelate from LL-2,6-diaminopimelate: step 1/1. Catalyzes the stereoinversion of LL-2,6-diaminopimelate (L,L-DAP) to meso-diaminopimelate (meso-DAP), a precursor of L-lysine and an essential component of the bacterial peptidoglycan. The chain is Diaminopimelate epimerase from Haemophilus ducreyi (strain 35000HP / ATCC 700724).